Reading from the N-terminus, the 254-residue chain is MGKVILVTGVSRGIGKSIVDVLFSLDKDTVVYGVARSEAPLKKLKEKYGDRFFYVVGDITEDSVLKQLVNAAVKGHGKIDSLVANAGVLEPVQNVNEIDVNAWKKLYDINFFSIVSLVGIALPELKKTNGNVVFVSSDACNMYFSSWGAYGSSKAALNHFAMTLANEERQVKAIAVAPGIVDTDMQVNIRENVGPSSMSAEQLKMFRGLKENNQLLDSSVPATVYAKLALHGIPDGVNGQYLSYNDPALADFMP.

Residues V7 and N85 each contribute to the NADP(+) site. S136 acts as the Proton donor in catalysis. NADP(+)-binding residues include Y150, K154, V181, and T183. The Proton acceptor role is filled by Y150. Catalysis depends on K154, which acts as the Lowers pKa of active site Tyr.

The protein belongs to the short-chain dehydrogenases/reductases (SDR) family.

This is an uncharacterized protein from Saccharomyces cerevisiae (strain ATCC 204508 / S288c) (Baker's yeast).